The sequence spans 205 residues: Beta-crystallin B2 (205 aa).

Alanine 2 bears the N-acetylalanine mark. Residues alanine 2 to asparagine 16 are N-terminal arm. Beta/gamma crystallin 'Greek key' domains follow at residues proline 17 to alanine 56 and glycine 57 to lysine 101. Residues valine 102–glutamate 106 are connecting peptide. Beta/gamma crystallin 'Greek key' domains lie at histidine 107–serine 148 and glycine 149–arginine 191. Residues methionine 193 to asparagine 205 are C-terminal arm.

It belongs to the beta/gamma-crystallin family. Homo/heterodimer, or complexes of higher-order. The structure of beta-crystallin oligomers seems to be stabilized through interactions between the N-terminal arms.

Functionally, crystallins are the dominant structural components of the vertebrate eye lens. The chain is Beta-crystallin B2 (CRYBB2) from Canis lupus familiaris (Dog).